Consider the following 301-residue polypeptide: Lycopene elongase/hydratase (301 aa).

The tract at residues 1–20 (MSADMAAQSESGEGGDDGRA) is disordered. Transmembrane regions (helical) follow at residues 39–59 (FWLY…SALA), 61–81 (LFGL…NVFL), 110–130 (PVNT…FAVA), 133–153 (VAWP…APPF), 160–180 (LLDS…YAAV), 186–206 (PMLA…FSAI), 229–249 (TYWY…AVDL), 252–272 (GALL…GVDV), and 276–296 (YWWY…GALW).

This sequence belongs to the UbiA prenyltransferase family.

The protein resides in the cell membrane. The catalysed reaction is all-trans-lycopene + dimethylallyl diphosphate + H2O = dihydroisopentenyldehydrorhodopin + diphosphate. It catalyses the reaction isopentenyldehydrorhodopin + dimethylallyl diphosphate + H2O = dihydrobisanhydrobacterioruberin + diphosphate. It participates in carotenoid biosynthesis. Functionally, involved in the biosynthesis of the acyclic C50 carotenoid bacterioruberin (BR). Acts as a bifunctional elongase/hydratase that catalyzes the elongation of lycopene by attaching a C(5) isoprene unit at C-2, as well as the hydroxylation of the previous end of the molecule. The enzyme acts at both ends of the substrate, and catalyzes the conversion of lycopene to the C(45) intermediate dihydroisopentenyldehydrorhodopin (DH-IDR) and the conversion of isopentenyldehydrorhodopin (IDR) to the C(50) carotenoid dihydrobisanhydrobacterioruberin (DH-BABR). Can also catalyze the conversion of lycopene to tetrahydrobisanhydrobacterioruberin (TH-BABR). The sequence is that of Lycopene elongase/hydratase from Haloferax volcanii (strain ATCC 29605 / DSM 3757 / JCM 8879 / NBRC 14742 / NCIMB 2012 / VKM B-1768 / DS2) (Halobacterium volcanii).